The chain runs to 53 residues: Rubredoxin-1 (53 aa).

Residues 1 to 53 enclose the Rubredoxin-like domain; the sequence is MEKFVCDVCGYIYDPVVGDPDNGVAPGTKFKDIPDTWVCPLCKLDKTHFSKVE. Residues cysteine 6, cysteine 9, cysteine 39, and cysteine 42 each coordinate Fe cation.

The protein belongs to the rubredoxin family. The cofactor is Fe(3+).

Its function is as follows. Rubredoxin is a small nonheme, iron protein lacking acid-labile sulfide. Its single Fe, chelated to 4 Cys, functions as an electron acceptor and may also stabilize the conformation of the molecule. This Clostridium perfringens (strain 13 / Type A) protein is Rubredoxin-1 (rubR1).